Here is a 307-residue protein sequence, read N- to C-terminus: MEKYDLITILGPTASGKTPLAAALAYKLDTEIISGDSRQVYRRMDLGTGKDLEDYVVNGQQIPYHLIDIVDPGYKYNVFEFQRDFLNAYDQVRWKDKLPILCGGTGMYLESVLKGYRLLPVPENPKLRDSLADKSLAELTRLLSTYRKLHNSTDVDTVKRAIRAIEIEEYYKHQSAEYREFPQIHSLIIGVDIARELRREKISHRLKQRLDEGMVNEVKALLDSGISSEDLIYYGLEYKYLTLYVLGKLSFNEMFHQLEIAIHQFAKRQMTWFRGMERRGFTIHWLDACLPMEDKVEKIINLLHTKN.

11-18 (GPTASGKT) provides a ligand contact to ATP. 13–18 (TASGKT) is a binding site for substrate. The tract at residues 36–39 (DSRQ) is interaction with substrate tRNA.

The protein belongs to the IPP transferase family. As to quaternary structure, monomer. The cofactor is Mg(2+).

It carries out the reaction adenosine(37) in tRNA + dimethylallyl diphosphate = N(6)-dimethylallyladenosine(37) in tRNA + diphosphate. Its function is as follows. Catalyzes the transfer of a dimethylallyl group onto the adenine at position 37 in tRNAs that read codons beginning with uridine, leading to the formation of N6-(dimethylallyl)adenosine (i(6)A). This Phocaeicola vulgatus (strain ATCC 8482 / DSM 1447 / JCM 5826 / CCUG 4940 / NBRC 14291 / NCTC 11154) (Bacteroides vulgatus) protein is tRNA dimethylallyltransferase 2.